The primary structure comprises 282 residues: 2-dehydro-3-deoxyphosphooctonate aldolase (282 aa).

It belongs to the KdsA family.

The protein localises to the cytoplasm. The enzyme catalyses D-arabinose 5-phosphate + phosphoenolpyruvate + H2O = 3-deoxy-alpha-D-manno-2-octulosonate-8-phosphate + phosphate. It functions in the pathway carbohydrate biosynthesis; 3-deoxy-D-manno-octulosonate biosynthesis; 3-deoxy-D-manno-octulosonate from D-ribulose 5-phosphate: step 2/3. Its pathway is bacterial outer membrane biogenesis; lipopolysaccharide biosynthesis. This Bartonella bacilliformis (strain ATCC 35685 / KC583 / Herrer 020/F12,63) protein is 2-dehydro-3-deoxyphosphooctonate aldolase.